A 314-amino-acid polypeptide reads, in one-letter code: Palmitoyl-protein thioesterase 1 (314 aa).

Residues 1–25 (MISICCSRFSCILFLLFLIFSLVLS) form the signal peptide. 3 disulfide bridges follow: Cys-53–Cys-54, Cys-104–Cys-136, and Cys-160–Cys-168. The active-site Nucleophile is Ser-123. N-linked (GlcNAc...) asparagine glycosylation occurs at Asn-240. Catalysis depends on residues Asp-241 and His-295.

This sequence belongs to the palmitoyl-protein thioesterase family. Ubiquitously expressed.

Its subcellular location is the lysosome. It catalyses the reaction S-hexadecanoyl-L-cysteinyl-[protein] + H2O = L-cysteinyl-[protein] + hexadecanoate + H(+). Its function is as follows. Cleaves thioester-linked long fatty acyl groups such as palmitate from modified cysteine residues in proteins or peptides. This Drosophila melanogaster (Fruit fly) protein is Palmitoyl-protein thioesterase 1 (Ppt1).